The following is a 423-amino-acid chain: Imidazolonepropionase (423 aa).

The Fe(3+) site is built by H78 and H80. Zn(2+) contacts are provided by H78 and H80. R87, Y150, and H183 together coordinate 4-imidazolone-5-propanoate. Residue Y150 participates in N-formimidoyl-L-glutamate binding. H247 is a binding site for Fe(3+). Position 247 (H247) interacts with Zn(2+). A 4-imidazolone-5-propanoate-binding site is contributed by E250. D322 lines the Fe(3+) pocket. D322 lines the Zn(2+) pocket. The N-formimidoyl-L-glutamate site is built by N324 and G326. S327 contributes to the 4-imidazolone-5-propanoate binding site.

The protein belongs to the metallo-dependent hydrolases superfamily. HutI family. Zn(2+) is required as a cofactor. Requires Fe(3+) as cofactor.

It localises to the cytoplasm. The catalysed reaction is 4-imidazolone-5-propanoate + H2O = N-formimidoyl-L-glutamate. It participates in amino-acid degradation; L-histidine degradation into L-glutamate; N-formimidoyl-L-glutamate from L-histidine: step 3/3. In terms of biological role, catalyzes the hydrolytic cleavage of the carbon-nitrogen bond in imidazolone-5-propanoate to yield N-formimidoyl-L-glutamate. It is the third step in the universal histidine degradation pathway. The protein is Imidazolonepropionase of Bacillus mycoides (strain KBAB4) (Bacillus weihenstephanensis).